We begin with the raw amino-acid sequence, 355 residues long: uncharacterized protein (355 aa).

It belongs to the TmcAL family.

This is an uncharacterized protein from Methanocaldococcus jannaschii (strain ATCC 43067 / DSM 2661 / JAL-1 / JCM 10045 / NBRC 100440) (Methanococcus jannaschii).